We begin with the raw amino-acid sequence, 1641 residues long: Maestro heat-like repeat-containing protein family member 1 (1641 aa).

7 HEAT repeats span residues 3–41, 159–198, 344–382, 385–423, 1048–1086, 1358–1396, and 1605–1641; these read ESSM…ARPV, VPFL…GALE, CSSP…SAAA, EDKK…HGYL, PDQL…ERGG, LMLL…GCPD, and QVDL…VKLA.

Belongs to the MROH1 family. As to quaternary structure, homooligomer; homooligomerizes at lysosome scission sites.

The protein localises to the lysosome membrane. Functionally, lysosome fission factor. Recruited to lysosomes by RAB7 (RAB7A or RAB7B) at scission sites and homooligomerizes to mediate the constriction and scission of lysosomal tubules. May sever membranes by inserting amphipathic helices into one bilayer leaflet. Lysosome fission is required to maintain their steady-state number, shape, size, composition and function, and to accomplish regeneration. This Homo sapiens (Human) protein is Maestro heat-like repeat-containing protein family member 1.